A 327-amino-acid chain; its full sequence is GMP reductase (327 aa).

Catalysis depends on C176, which acts as the Thioimidate intermediate. I205–V228 contributes to the NADP(+) binding site.

The protein belongs to the IMPDH/GMPR family. GuaC type 2 subfamily.

The enzyme catalyses IMP + NH4(+) + NADP(+) = GMP + NADPH + 2 H(+). Catalyzes the irreversible NADPH-dependent deamination of GMP to IMP. It functions in the conversion of nucleobase, nucleoside and nucleotide derivatives of G to A nucleotides, and in maintaining the intracellular balance of A and G nucleotides. This Streptococcus suis (strain 05ZYH33) protein is GMP reductase.